A 365-amino-acid polypeptide reads, in one-letter code: Phosphatidylcholine:ceramide cholinephosphotransferase 4 (365 aa).

The Cytoplasmic portion of the chain corresponds to 1–44 (MISYPFFSLSPPGLVPPPMAVPPVEMYSGSFWNRMRKPLPLRTQ). The chain crosses the membrane as a helical span at residues 45–65 (VIRFTVVFVIVSFILAVALQI). Topologically, residues 66–92 (THERMPDPKVTKPLPDLGFELLTKVPG) are lumenal. Residues 93 to 113 (MYVLADCCIGFLNILSVFTAF) form a helical membrane-spanning segment. The Cytoplasmic segment spans residues 114 to 165 (KLYLLHRHCVGSGEPELPCNIPGVSRFFLSVWLCKENCRIELRNIHTIAWIR). A helical membrane pass occupies residues 166-186 (FITSYALLLLFRSAVIVMTSL). Topologically, residues 187–229 (PAPDDLCQDPPKIENPVKNVILTVLTAGGGSIHCGDLMYSGHT) are lumenal. His228 is an active-site residue. A helical membrane pass occupies residues 230-250 (VILTLHLMFHWIYGAMVHWSF). Residue Arg251 is a topological domain, cytoplasmic. A helical membrane pass occupies residues 252–272 (PVVTVVAIFGYYCIVASRFHY). Active-site residues include His271 and Asp275. Over 273-275 (TDD) the chain is Lumenal. Residues 276 to 296 (VLVAIYLTIATFIAVGHNADG) form a helical membrane-spanning segment. The Cytoplasmic segment spans residues 297–365 (APWQLQLFIR…SLMFKCGAYV (69 aa)).

This sequence belongs to the sphingomyelin synthase family.

The protein localises to the golgi apparatus membrane. The catalysed reaction is an N-acylsphing-4-enine + a 1,2-diacyl-sn-glycero-3-phosphocholine = a sphingomyelin + a 1,2-diacyl-sn-glycerol. It catalyses the reaction an N-acylsphinganine + a 1,2-diacyl-sn-glycero-3-phosphocholine = an N-acylsphinganine-1-phosphocholine + a 1,2-diacyl-sn-glycerol. It carries out the reaction an N-acylsphing-4-enine + a 1,2-diacyl-sn-glycero-3-phosphoethanolamine = an N-acylsphing-4-enine 1-phosphoethanolamine + a 1,2-diacyl-sn-glycerol. The enzyme catalyses an N-acylsphinganine + a 1,2-diacyl-sn-glycero-3-phosphoethanolamine = an N-acylsphinganine-1-phosphoethanolamine + a 1,2-diacyl-sn-glycerol. The catalysed reaction is a 1,2-diacyl-sn-glycero-3-phospho-(1D-myo-inositol) + an N-acylsphing-4-enine = an N-acylsphing-4-enine-(1D-myo-inositol) + a 1,2-diacyl-sn-glycerol. It catalyses the reaction an N-acylsphinganine + a 1,2-diacyl-sn-glycero-3-phospho-(1D-myo-inositol) = an N-acylsphinganine-(1D-myo-inositol) + a 1,2-diacyl-sn-glycerol. Its function is as follows. Bifunctional sphingomyelin (SM)/ethanolamine phosphorylceramide (EPC) synthase with minimal inositol phosphorylceramide (IPC) synthase activity. Specificity is likely to be defined by residues in the lumenal catalytic domain that interact with the polar head groups of the phospholipid donors. SM is synthesized by both stages of the parasite life cycle, bloodstream forms (BSF) and procyclic forms (PCF), by transferring the phosphoryl headgroup from a 1,2-diacyl-sn-glycero-3-phosphocholine to an N-acylsphing-4-enine (ceramide) or an N-acylsphinganine (dihydroceramide) with release of 1,2-diacyl-sn-glycerol. Also catalyzes the reverse reaction, production of ceramide from sphingomyelin. EPC is synthesized by transferring phosphoethanolamine from a 1,2-diacyl-sn-glycero-3-phosphoethanolamine to ceramide or dihydroceramide by BSF and PCF, while IPC is confined to PCF. The ceramide/dihydroceramide ratios are skewed towards dihydroceramide in PCF parasites and ceramide in BSF parasites, this is likely due to differential expression and/or regulation of dihydroceramide desaturase, the enzyme responsible for converting dihydroceramide to ceramide. The protein is Phosphatidylcholine:ceramide cholinephosphotransferase 4 of Trypanosoma brucei brucei.